A 355-amino-acid chain; its full sequence is Uroporphyrinogen decarboxylase (355 aa).

Residues 27-31 (RQAGR), aspartate 77, tyrosine 154, threonine 209, and histidine 328 contribute to the substrate site.

The protein belongs to the uroporphyrinogen decarboxylase family. Homodimer.

It localises to the cytoplasm. The enzyme catalyses uroporphyrinogen III + 4 H(+) = coproporphyrinogen III + 4 CO2. The protein operates within porphyrin-containing compound metabolism; protoporphyrin-IX biosynthesis; coproporphyrinogen-III from 5-aminolevulinate: step 4/4. Catalyzes the decarboxylation of four acetate groups of uroporphyrinogen-III to yield coproporphyrinogen-III. The sequence is that of Uroporphyrinogen decarboxylase from Colwellia psychrerythraea (strain 34H / ATCC BAA-681) (Vibrio psychroerythus).